Reading from the N-terminus, the 880-residue chain is Alanine--tRNA ligase (880 aa).

Zn(2+)-binding residues include His-566, His-570, Cys-668, and His-672.

Belongs to the class-II aminoacyl-tRNA synthetase family. Requires Zn(2+) as cofactor.

The protein resides in the cytoplasm. The catalysed reaction is tRNA(Ala) + L-alanine + ATP = L-alanyl-tRNA(Ala) + AMP + diphosphate. Its function is as follows. Catalyzes the attachment of alanine to tRNA(Ala) in a two-step reaction: alanine is first activated by ATP to form Ala-AMP and then transferred to the acceptor end of tRNA(Ala). Also edits incorrectly charged Ser-tRNA(Ala) and Gly-tRNA(Ala) via its editing domain. This Nostoc sp. (strain PCC 7120 / SAG 25.82 / UTEX 2576) protein is Alanine--tRNA ligase.